We begin with the raw amino-acid sequence, 523 residues long: Mediator of RNA polymerase II transcription subunit 1.2 (523 aa).

This sequence belongs to the Mediator complex subunit 1 family. As to quaternary structure, component of the Mediator complex.

The protein localises to the nucleus. Functionally, component of the Mediator complex, a coactivator involved in the regulated transcription of nearly all RNA polymerase II-dependent genes. Mediator functions as a bridge to convey information from gene-specific regulatory proteins to the basal RNA polymerase II transcription machinery. Mediator is recruited to promoters by direct interactions with regulatory proteins and serves as a scaffold for the assembly of a functional preinitiation complex with RNA polymerase II and the general transcription factors. The chain is Mediator of RNA polymerase II transcription subunit 1.2 (mdt-1.2) from Caenorhabditis briggsae.